The following is a 501-amino-acid chain: 2,3-bisphosphoglycerate-independent phosphoglycerate mutase (501 aa).

Positions 12 and 62 each coordinate Mn(2+). Ser-62 functions as the Phosphoserine intermediate in the catalytic mechanism. Residues His-121, Arg-150 to Asp-151, Arg-182, Arg-188, Arg-253 to Arg-256, and Lys-322 each bind substrate. Residues Asp-389, His-393, Asp-430, His-431, and His-449 each contribute to the Mn(2+) site.

It belongs to the BPG-independent phosphoglycerate mutase family. As to quaternary structure, monomer. The cofactor is Mn(2+).

The enzyme catalyses (2R)-2-phosphoglycerate = (2R)-3-phosphoglycerate. It functions in the pathway carbohydrate degradation; glycolysis; pyruvate from D-glyceraldehyde 3-phosphate: step 3/5. In terms of biological role, catalyzes the interconversion of 2-phosphoglycerate and 3-phosphoglycerate. This chain is 2,3-bisphosphoglycerate-independent phosphoglycerate mutase, found in Ehrlichia ruminantium (strain Welgevonden).